Here is a 406-residue protein sequence, read N- to C-terminus: Argininosuccinate synthase (406 aa).

ATP contacts are provided by residues 10 to 18 (AYSGGLDTS) and Ala-37. Residues Tyr-88 and Ser-93 each coordinate L-citrulline. Gly-118 provides a ligand contact to ATP. Positions 120, 124, and 125 each coordinate L-aspartate. Asn-124 is a binding site for L-citrulline. Residues Arg-128, Ser-180, Ser-189, Glu-265, and Tyr-277 each contribute to the L-citrulline site.

The protein belongs to the argininosuccinate synthase family. Type 1 subfamily. In terms of assembly, homotetramer.

It is found in the cytoplasm. The enzyme catalyses L-citrulline + L-aspartate + ATP = 2-(N(omega)-L-arginino)succinate + AMP + diphosphate + H(+). The protein operates within amino-acid biosynthesis; L-arginine biosynthesis; L-arginine from L-ornithine and carbamoyl phosphate: step 2/3. The protein is Argininosuccinate synthase of Methylobacillus flagellatus (strain ATCC 51484 / DSM 6875 / VKM B-1610 / KT).